A 335-amino-acid chain; its full sequence is dTDP-glucose 4,6-dehydratase (335 aa).

Residues Phe11–Ile12, Asp38–Thr41, Asp61–Ile62, Phe81–Thr85, and Thr100 contribute to the NAD(+) site. Substrate is bound at residue Thr85. Thr125 is a binding site for substrate. Asp126 serves as the catalytic Proton donor. Active-site proton acceptor residues include Glu127 and Tyr149. Residue Tyr149 to Lys153 coordinates NAD(+). Asn178 is a binding site for substrate. Asn179 lines the NAD(+) pocket. Substrate contacts are provided by residues Lys188–Ile189, Pro204–Tyr206, Arg213, Asn248, and Asp271–His275.

Belongs to the NAD(P)-dependent epimerase/dehydratase family. dTDP-glucose dehydratase subfamily. NAD(+) is required as a cofactor.

It carries out the reaction dTDP-alpha-D-glucose = dTDP-4-dehydro-6-deoxy-alpha-D-glucose + H2O. The protein operates within antibiotic biosynthesis. Functionally, involved in the biosynthesis of the two 2,6-deoxysugars, dTDP-L-oleandrose and dTDP-D-desosamine, attached to the macrolactone ring oleandolide to produce the aglycone antibiotic oleandomycin. Catalyzes the dehydration of dTDP-D-glucose to form dTDP-6-deoxy-D-xylo-4-hexulose via a three-step process involving oxidation, dehydration and reduction. This Streptomyces antibioticus protein is dTDP-glucose 4,6-dehydratase.